We begin with the raw amino-acid sequence, 480 residues long: O-acyltransferase ausP (480 aa).

Active-site proton acceptor residues include His-180 and Asp-412.

Belongs to the plant acyltransferase family. Monomer.

The protein operates within secondary metabolite biosynthesis; terpenoid biosynthesis. Functionally, O-acyltransferase; part of the gene cluster that mediates the biosynthesis of calidodehydroaustin, a fungal meroterpenoid. The first step of the pathway is the synthesis of 3,5-dimethylorsellinic acid by the polyketide synthase ausA. 3,5-dimethylorsellinic acid is then prenylated by the polyprenyl transferase ausN. Further epoxidation by the FAD-dependent monooxygenase ausM and cyclization by the probable terpene cyclase ausL lead to the formation of protoaustinoid A. Protoaustinoid A is then oxidized to spiro-lactone preaustinoid A3 by the combined action of the FAD-binding monooxygenases ausB and ausC, and the dioxygenase ausE. Acid-catalyzed keto-rearrangement and ring contraction of the tetraketide portion of preaustinoid A3 by ausJ lead to the formation of preaustinoid A4. The aldo-keto reductase ausK, with the help of ausH, is involved in the next step by transforming preaustinoid A4 into isoaustinone which is in turn hydroxylated by the P450 monooxygenase ausI to form austinolide. The cytochrome P450 monooxygenase ausG modifies austinolide to austinol. Austinol is further acetylated to austin by the O-acetyltransferase ausP, which spontaneously changes to dehydroaustin. The cytochrome P450 monooxygenase ausR then converts dehydroaustin is into 7-dehydrodehydroaustin. The hydroxylation catalyzed by ausR permits the O-acetyltransferase ausQ to add an additional acetyl group to the molecule, leading to the formation of acetoxydehydroaustin. The short chain dehydrogenase ausT catalyzes the reduction of the double bond present between carbon atoms 1 and 2 to convert 7-dehydrodehydroaustin into 1,2-dihydro-7-hydroxydehydroaustin. AusQ catalyzes not only an acetylation reaction but also the addition of the PKS ausV diketide product to 1,2-dihydro-7-hydroxydehydroaustin, forming precalidodehydroaustin. Finally, the iron/alpha-ketoglutarate-dependent dioxygenase converts precalidodehydroaustin into calidodehydroaustin. This chain is O-acyltransferase ausP, found in Aspergillus calidoustus.